Consider the following 543-residue polypeptide: Glucose-6-phosphate isomerase (543 aa).

Glu-353 functions as the Proton donor in the catalytic mechanism. Catalysis depends on residues His-384 and Lys-512.

It belongs to the GPI family.

The protein resides in the cytoplasm. It carries out the reaction alpha-D-glucose 6-phosphate = beta-D-fructose 6-phosphate. Its pathway is carbohydrate biosynthesis; gluconeogenesis. It functions in the pathway carbohydrate degradation; glycolysis; D-glyceraldehyde 3-phosphate and glycerone phosphate from D-glucose: step 2/4. Catalyzes the reversible isomerization of glucose-6-phosphate to fructose-6-phosphate. This chain is Glucose-6-phosphate isomerase, found in Christiangramia forsetii (strain DSM 17595 / CGMCC 1.15422 / KT0803) (Gramella forsetii).